A 188-amino-acid chain; its full sequence is Zinc finger protein 428 (188 aa).

The segment at 1 to 162 (MTETREPAET…EEEEEEGTYH (162 aa)) is disordered. Positions 40–61 (PDSEEEEDEEEEEEETTDDPEY) are enriched in acidic residues. Residues 84 to 94 (RAAQPPAQPCQ) show a composition bias toward low complexity. T108 is subject to Phosphothreonine. Residues 116-129 (PATAPQEAPAPEGR) are compositionally biased toward low complexity. The span at 138-149 (PPRAGEGRPAGR) shows a compositional bias: basic and acidic residues. The C2H2-type zinc-finger motif lies at 161 to 183 (YHCTECEDSFDNLGELHGHFMLH).

The polypeptide is Zinc finger protein 428 (ZNF428) (Homo sapiens (Human)).